The chain runs to 73 residues: MNFLLSKLLLGLIRFYQYCISPLIPPRCRYTPTCSQYAVEAVKKYGAFKGLRLAIKRIARCHPFGGHGHDPVP.

It belongs to the UPF0161 family.

It is found in the cell inner membrane. Could be involved in insertion of integral membrane proteins into the membrane. This Neisseria gonorrhoeae (strain ATCC 700825 / FA 1090) protein is Putative membrane protein insertion efficiency factor.